The chain runs to 37 residues: Cytochrome b6-f complex subunit 5 (37 aa).

Residues 5–25 form a helical membrane-spanning segment; sequence FLFGIVLGLIPITLAGLFVTA.

Belongs to the PetG family. The 4 large subunits of the cytochrome b6-f complex are cytochrome b6, subunit IV (17 kDa polypeptide, PetD), cytochrome f and the Rieske protein, while the 4 small subunits are PetG, PetL, PetM and PetN. The complex functions as a dimer.

It localises to the plastid. It is found in the chloroplast thylakoid membrane. Its function is as follows. Component of the cytochrome b6-f complex, which mediates electron transfer between photosystem II (PSII) and photosystem I (PSI), cyclic electron flow around PSI, and state transitions. PetG is required for either the stability or assembly of the cytochrome b6-f complex. This is Cytochrome b6-f complex subunit 5 from Capsella bursa-pastoris (Shepherd's purse).